We begin with the raw amino-acid sequence, 679 residues long: ATP-dependent zinc metalloprotease FtsH (679 aa).

The Cytoplasmic segment spans residues 1–6; that stretch reads MNRIFR. The helical transmembrane segment at 7–27 threads the bilayer; that stretch reads NTIFYLLIFLVIVGIVSVFNS. At 28–114 the chain is on the extracellular side; that stretch reads DQTETENVSF…IEPADETSGW (87 aa). A helical transmembrane segment spans residues 115–135; sequence VQFFTGIIPFIIIFILFFFLL. Residues 136–679 are Cytoplasmic-facing; sequence SQAQGGGSRV…SFEDDTNKKE (544 aa). Position 206–213 (206–213) interacts with ATP; it reads GPPGTGKT. Residue His-428 participates in Zn(2+) binding. The active site involves Glu-429. The Zn(2+) site is built by His-432 and Asp-504. Composition is skewed to basic and acidic residues over residues 621-642 and 658-679; these read LEKEKASESDVKVNINSKKEET and PIEKDPSVEDNRSFEDDTNKKE. Positions 621–679 are disordered; it reads LEKEKASESDVKVNINSKKEETPQVEAEQPQEPNTDEPIEKDPSVEDNRSFEDDTNKKE.

It in the central section; belongs to the AAA ATPase family. This sequence in the C-terminal section; belongs to the peptidase M41 family. In terms of assembly, homohexamer. Requires Zn(2+) as cofactor.

The protein localises to the cell membrane. Its function is as follows. Acts as a processive, ATP-dependent zinc metallopeptidase for both cytoplasmic and membrane proteins. Plays a role in the quality control of integral membrane proteins. The chain is ATP-dependent zinc metalloprotease FtsH from Alkalihalophilus pseudofirmus (strain ATCC BAA-2126 / JCM 17055 / OF4) (Bacillus pseudofirmus).